Consider the following 177-residue polypeptide: MGYKDLPPGKNPPEDIYVVIEIPQGSGIKYELDKDTGVIFVDRFLFTAMYYPFNYGFIPQTLADDGDPVDVLVISREPVAPGSVMRCRPIGMLEMRDEEGIDTKLIAVPHEKLDPTYSDIKTVDQLPEIIRERIKHFFEHYKELEPGKWVKVENWRGLQDAIEEIKKGIENYKKGGK.

Substrate-binding residues include Lys29, Arg43, and Tyr55. Positions 65, 70, and 102 each coordinate Mg(2+). A substrate-binding site is contributed by Tyr141.

Belongs to the PPase family. In terms of assembly, homohexamer. Mg(2+) is required as a cofactor.

It localises to the cytoplasm. The enzyme catalyses diphosphate + H2O = 2 phosphate + H(+). Functionally, catalyzes the hydrolysis of inorganic pyrophosphate (PPi) forming two phosphate ions. The protein is Inorganic pyrophosphatase of Aquifex pyrophilus.